The chain runs to 580 residues: uncharacterized protein (580 aa).

5 disordered regions span residues 161-241, 256-281, 325-345, 472-495, and 544-564; these read SFSP…SVND, LGSLSTNTSSTAQKNKSRKPTKSFSD, NVSHEEKSHSVQDDKSKQLLK, PRDTDIKATPNLSQSGNINSDNSD, and SAVLRRQSSQSSGANDDKEVR. A compositionally biased stretch (low complexity) spans 192–203; the sequence is SNSNSSDTSTDD. Composition is skewed to polar residues over residues 223–241 and 256–269; these read THSSAPPLNQQKSSTSVND and LGSLSTNTSSTAQK. Residues 326–341 show a composition bias toward basic and acidic residues; sequence VSHEEKSHSVQDDKSK. Residues 481 to 495 show a composition bias toward polar residues; it reads PNLSQSGNINSDNSD.

This is an uncharacterized protein from Schizosaccharomyces pombe (strain 972 / ATCC 24843) (Fission yeast).